The following is a 296-amino-acid chain: 33 kDa chaperonin (296 aa).

Cystine bridges form between Cys236–Cys238 and Cys269–Cys272.

The protein belongs to the HSP33 family. Under oxidizing conditions two disulfide bonds are formed involving the reactive cysteines. Under reducing conditions zinc is bound to the reactive cysteines and the protein is inactive.

The protein localises to the cytoplasm. In terms of biological role, redox regulated molecular chaperone. Protects both thermally unfolding and oxidatively damaged proteins from irreversible aggregation. Plays an important role in the bacterial defense system toward oxidative stress. This chain is 33 kDa chaperonin, found in Lactobacillus acidophilus (strain ATCC 700396 / NCK56 / N2 / NCFM).